Here is a 256-residue protein sequence, read N- to C-terminus: Ubiquinone/menaquinone biosynthesis C-methyltransferase UbiE (256 aa).

A compositionally biased stretch (basic and acidic residues) spans 1–12; sequence MNDQRKGDHAEP. The disordered stretch occupies residues 1–23; that stretch reads MNDQRKGDHAEPTTHFGYQDVPE. Residues T79, D100, and 128 to 129 contribute to the S-adenosyl-L-methionine site; that span reads DA.

Belongs to the class I-like SAM-binding methyltransferase superfamily. MenG/UbiE family.

It carries out the reaction a 2-demethylmenaquinol + S-adenosyl-L-methionine = a menaquinol + S-adenosyl-L-homocysteine + H(+). The enzyme catalyses a 2-methoxy-6-(all-trans-polyprenyl)benzene-1,4-diol + S-adenosyl-L-methionine = a 5-methoxy-2-methyl-3-(all-trans-polyprenyl)benzene-1,4-diol + S-adenosyl-L-homocysteine + H(+). Its pathway is quinol/quinone metabolism; menaquinone biosynthesis; menaquinol from 1,4-dihydroxy-2-naphthoate: step 2/2. It functions in the pathway cofactor biosynthesis; ubiquinone biosynthesis. Methyltransferase required for the conversion of demethylmenaquinol (DMKH2) to menaquinol (MKH2) and the conversion of 2-polyprenyl-6-methoxy-1,4-benzoquinol (DDMQH2) to 2-polyprenyl-3-methyl-6-methoxy-1,4-benzoquinol (DMQH2). The chain is Ubiquinone/menaquinone biosynthesis C-methyltransferase UbiE from Pseudomonas putida (strain GB-1).